The chain runs to 336 residues: DNA-directed RNA polymerase subunit alpha (336 aa).

The segment at 1 to 232 (MIQKNWQELI…DQLSVFVNFD (232 aa)) is alpha N-terminal domain (alpha-NTD). An alpha C-terminal domain (alpha-CTD) region spans residues 248–336 (FNPALLKKVD…DLAKRYEDQY (89 aa)).

Belongs to the RNA polymerase alpha chain family. Homodimer. The RNAP catalytic core consists of 2 alpha, 1 beta, 1 beta' and 1 omega subunit. When a sigma factor is associated with the core the holoenzyme is formed, which can initiate transcription.

The catalysed reaction is RNA(n) + a ribonucleoside 5'-triphosphate = RNA(n+1) + diphosphate. DNA-dependent RNA polymerase catalyzes the transcription of DNA into RNA using the four ribonucleoside triphosphates as substrates. This Sinorhizobium fredii (strain NBRC 101917 / NGR234) protein is DNA-directed RNA polymerase subunit alpha.